A 316-amino-acid polypeptide reads, in one-letter code: D-alanine--D-alanine ligase (316 aa).

An ATP-grasp domain is found at 104–303 (KRVWLQHGLP…YADLCVAILA (200 aa)). 130–185 (PDRLGLPLILKPPHEGSTVGITKVAGYSDMKAAYELAARFDAEVLAEQFITGRELT) is an ATP binding site. Residues aspartate 257, glutamate 270, and asparagine 272 each coordinate Mg(2+).

Belongs to the D-alanine--D-alanine ligase family. The cofactor is Mg(2+). Requires Mn(2+) as cofactor.

The protein localises to the cytoplasm. It carries out the reaction 2 D-alanine + ATP = D-alanyl-D-alanine + ADP + phosphate + H(+). It functions in the pathway cell wall biogenesis; peptidoglycan biosynthesis. Cell wall formation. The protein is D-alanine--D-alanine ligase of Bordetella bronchiseptica (strain ATCC BAA-588 / NCTC 13252 / RB50) (Alcaligenes bronchisepticus).